Here is a 349-residue protein sequence, read N- to C-terminus: Cytoplasmic tRNA 2-thiolation protein 2 (349 aa).

It belongs to the CTU2/NCS2 family.

The protein localises to the cytoplasm. The protein operates within tRNA modification; 5-methoxycarbonylmethyl-2-thiouridine-tRNA biosynthesis. In terms of biological role, plays a central role in 2-thiolation of mcm(5)S(2)U at tRNA wobble positions of tRNA(Lys), tRNA(Glu) and tRNA(Gln). May act by forming a heterodimer with tut-1/ctu-1 that ligates sulfur from thiocarboxylated urm-1 onto the uridine of tRNAs at wobble position. This Caenorhabditis briggsae protein is Cytoplasmic tRNA 2-thiolation protein 2.